The chain runs to 667 residues: E3 ubiquitin-protein ligase Midline-1 (667 aa).

The segment at 10 to 60 (CPICLELLEDPLLLPCAHSLCFNCAHRILVSHCATNEPVESINAFQCPTCR) adopts an RING-type zinc-finger fold. A phosphoserine mark is found at Ser-92 and Ser-96. B box-type zinc fingers lie at residues 116-165 (KVLC…IEPI) and 172-212 (GLMC…VAAL). Zn(2+) is bound by residues Cys-119, Cys-122, Cys-134, Cys-137, Cys-142, Cys-145, His-150, His-159, Cys-175, His-178, Cys-198, and His-204. The stretch at 205-264 (RDHQVAALSERYDKLKQNLESNLTNLIKRNTELETLLAKLIQTCQHVEVNASRQEAKLTE) forms a coiled coil. The 60-residue stretch at 320–379 (LKENDHARFLQTAKNITERVSMATASSQVLIPEINLNDTFDTFALDFSREKKLLECLDYL) folds into the COS domain. The Fibronectin type-III domain occupies 381-484 (APNPPTIREE…EPGKLKTNSQ (104 aa)). The span at 471–485 (SRSSEPGKLKTNSQP) shows a compositional bias: polar residues. Residues 471–524 (SRSSEPGKLKTNSQPFKLDPKSAHRKLKVSHDNLTVERDESSSKKSHTPERFTS) are disordered. Residues 482 to 659 (NSQPFKLDPK…IITGLPIPDH (178 aa)) form the B30.2/SPRY domain. Positions 499-520 (VSHDNLTVERDESSSKKSHTPE) are enriched in basic and acidic residues. Phosphoserine is present on Ser-511.

The protein belongs to the TRIM/RBCC family. Homodimer or heterodimer with MID2. Interacts with IGBP1.

It is found in the cytoplasm. It localises to the cytoskeleton. The catalysed reaction is S-ubiquitinyl-[E2 ubiquitin-conjugating enzyme]-L-cysteine + [acceptor protein]-L-lysine = [E2 ubiquitin-conjugating enzyme]-L-cysteine + N(6)-ubiquitinyl-[acceptor protein]-L-lysine.. Has E3 ubiquitin ligase activity towards IGBP1, promoting its monoubiquitination, which results in deprotection of the catalytic subunit of protein phosphatase PP2A, and its subsequent degradation by polyubiquitination. This Mus spretus (Western Mediterranean mouse) protein is E3 ubiquitin-protein ligase Midline-1 (Mid1).